Here is a 284-residue protein sequence, read N- to C-terminus: Tropomyosin (284 aa).

A disordered region spans residues M1–Q47. Positions M1–Y284 form a coiled coil. A compositionally biased stretch (basic and acidic residues) spans K12–K38.

This sequence belongs to the tropomyosin family.

Its function is as follows. Tropomyosin, in association with the troponin complex, plays a central role in the calcium dependent regulation of muscle contraction. This chain is Tropomyosin, found in Trichinella spiralis (Trichina worm).